The following is a 495-amino-acid chain: Glucose-6-phosphate 1-dehydrogenase (495 aa).

NADP(+) contacts are provided by residues 11–18 (GASGDLAK), Arg-45, 84–85 (DV), and Lys-147. Substrate-binding residues include His-177, Lys-181, Glu-215, and Asp-234. The active-site Proton acceptor is His-239. Substrate contacts are provided by Lys-339 and Lys-344.

The protein belongs to the glucose-6-phosphate dehydrogenase family.

The enzyme catalyses D-glucose 6-phosphate + NADP(+) = 6-phospho-D-glucono-1,5-lactone + NADPH + H(+). It functions in the pathway carbohydrate degradation; pentose phosphate pathway; D-ribulose 5-phosphate from D-glucose 6-phosphate (oxidative stage): step 1/3. Its function is as follows. Catalyzes the oxidation of glucose 6-phosphate to 6-phosphogluconolactone. In Streptococcus pneumoniae serotype 4 (strain ATCC BAA-334 / TIGR4), this protein is Glucose-6-phosphate 1-dehydrogenase.